The following is a 97-amino-acid chain: Aspartyl/glutamyl-tRNA(Asn/Gln) amidotransferase subunit C (97 aa).

The disordered stretch occupies residues 68-97 (ETGFTQEEALSNAPQQSQGQFRTPKVVESA). The span at 70 to 88 (GFTQEEALSNAPQQSQGQF) shows a compositional bias: polar residues.

It belongs to the GatC family. As to quaternary structure, heterotrimer of A, B and C subunits.

The catalysed reaction is L-glutamyl-tRNA(Gln) + L-glutamine + ATP + H2O = L-glutaminyl-tRNA(Gln) + L-glutamate + ADP + phosphate + H(+). It carries out the reaction L-aspartyl-tRNA(Asn) + L-glutamine + ATP + H2O = L-asparaginyl-tRNA(Asn) + L-glutamate + ADP + phosphate + 2 H(+). Allows the formation of correctly charged Asn-tRNA(Asn) or Gln-tRNA(Gln) through the transamidation of misacylated Asp-tRNA(Asn) or Glu-tRNA(Gln) in organisms which lack either or both of asparaginyl-tRNA or glutaminyl-tRNA synthetases. The reaction takes place in the presence of glutamine and ATP through an activated phospho-Asp-tRNA(Asn) or phospho-Glu-tRNA(Gln). In Akkermansia muciniphila (strain ATCC BAA-835 / DSM 22959 / JCM 33894 / BCRC 81048 / CCUG 64013 / CIP 107961 / Muc), this protein is Aspartyl/glutamyl-tRNA(Asn/Gln) amidotransferase subunit C.